The following is a 308-amino-acid chain: Ribosomal RNA small subunit methyltransferase A (308 aa).

Residues Asn35, Val37, Gly62, Glu83, Asp113, and Asn136 each contribute to the S-adenosyl-L-methionine site.

The protein belongs to the class I-like SAM-binding methyltransferase superfamily. rRNA adenine N(6)-methyltransferase family. RsmA subfamily.

The protein resides in the cytoplasm. It catalyses the reaction adenosine(1518)/adenosine(1519) in 16S rRNA + 4 S-adenosyl-L-methionine = N(6)-dimethyladenosine(1518)/N(6)-dimethyladenosine(1519) in 16S rRNA + 4 S-adenosyl-L-homocysteine + 4 H(+). Specifically dimethylates two adjacent adenosines (A1518 and A1519) in the loop of a conserved hairpin near the 3'-end of 16S rRNA in the 30S particle. May play a critical role in biogenesis of 30S subunits. This chain is Ribosomal RNA small subunit methyltransferase A, found in Bifidobacterium longum (strain NCC 2705).